A 610-amino-acid polypeptide reads, in one-letter code: E3 ubiquitin-protein ligase hrd-1 (610 aa).

The first 23 residues, 1–23 (MRVSAGLMIGGSCVATAATILNA), serve as a signal peptide directing secretion. Topologically, residues 24–41 (FLINKQFYPSIVYLSKSN) are lumenal. The chain crosses the membrane as a helical span at residues 42–62 (ASMAVIYVQGIVLVYLMFQLL). Topologically, residues 63–99 (KSILFGDLRAAEAEHLSERTWHAVLETCLAFTVFRDD) are cytoplasmic. A helical membrane pass occupies residues 100–120 (FSAIFVMQFIGLLFIKCFHWL). Residues 121–144 (ADDRVDMMERSPVITLRFHLRMMT) are Lumenal-facing. A helical membrane pass occupies residues 145–165 (VLAALGFADSYFVSSAYFTTI). Over 166-170 (TRGAS) the chain is Cytoplasmic. Residues 171–191 (AQIVFGFEYAILLALVLHVTI) traverse the membrane as a helical segment. Topologically, residues 192–215 (KYLLHMHDLRNPQSWDNKAVYLLY) are lumenal. Residues 216-236 (AELFINLIRCLLYGFFAVVML) form a helical membrane-spanning segment. Over 237 to 610 (RVHTFPLFSV…ARLLGENANQ (374 aa)) the chain is Cytoplasmic. The RING-type; atypical zinc finger occupies 292–333 (CIICREEMTVDASPKRLPCSHVFHAHCLRSWFQRQQTCPTCR). Disordered regions lie at residues 386-408 (QPAG…GPFP), 452-480 (VNTT…LRRM), and 521-610 (RPVV…NANQ). Positions 452-474 (VNTTQGTSSETPPVNPSYSQLST) are enriched in polar residues. A compositionally biased stretch (low complexity) spans 560–589 (TESPSTSSTAPSTSSPVTASSTPTTSSTRT).

This sequence belongs to the HRD1 family. In terms of assembly, homodimer.

It localises to the endoplasmic reticulum membrane. It catalyses the reaction S-ubiquitinyl-[E2 ubiquitin-conjugating enzyme]-L-cysteine + [acceptor protein]-L-lysine = [E2 ubiquitin-conjugating enzyme]-L-cysteine + N(6)-ubiquitinyl-[acceptor protein]-L-lysine.. Its pathway is protein modification; protein ubiquitination. Functionally, acts as an E3 ubiquitin-protein ligase which accepts ubiquitin specifically from endoplasmic reticulum-associated ubc-7 E2 ligase and transfers it to substrates, promoting their degradation. Component of the endoplasmic reticulum quality control (ERQC) system, which is also called the ER-associated degradation (ERAD) system, involved in ubiquitin-dependent degradation of misfolded endoplasmic reticulum proteins. Also promotes the degradation of normal but naturally short-lived proteins. Protects cells from ER stress-induced apoptosis. Thought to play a role together with hsp-3 in developmental growth and function of intestinal cells and to play a role together with hsp-4 in gonad formation. Plays a key role in the degradation of the potassium channel slo-1, perhaps acting directly, in targeting slo-1 to the ER-associated degradation pathway (ERAD), and also indirectly, via activation of the transcription factor skn-1, which mediates proteasomal homeostasis. The sequence is that of E3 ubiquitin-protein ligase hrd-1 (sel-11) from Caenorhabditis elegans.